A 101-amino-acid polypeptide reads, in one-letter code: NADH-quinone oxidoreductase subunit K (101 aa).

3 consecutive transmembrane segments (helical) span residues Leu4 to Leu24, Ile30 to Phe50, and Val61 to Leu81.

It belongs to the complex I subunit 4L family. As to quaternary structure, NDH-1 is composed of 14 different subunits. Subunits NuoA, H, J, K, L, M, N constitute the membrane sector of the complex.

It is found in the cell inner membrane. The enzyme catalyses a quinone + NADH + 5 H(+)(in) = a quinol + NAD(+) + 4 H(+)(out). Its function is as follows. NDH-1 shuttles electrons from NADH, via FMN and iron-sulfur (Fe-S) centers, to quinones in the respiratory chain. The immediate electron acceptor for the enzyme in this species is believed to be ubiquinone. Couples the redox reaction to proton translocation (for every two electrons transferred, four hydrogen ions are translocated across the cytoplasmic membrane), and thus conserves the redox energy in a proton gradient. In Methylovorus glucosotrophus (strain SIP3-4), this protein is NADH-quinone oxidoreductase subunit K.